We begin with the raw amino-acid sequence, 1252 residues long: DNA-directed RNA polymerase subunit beta (1252 aa).

This sequence belongs to the RNA polymerase beta chain family. The RNAP catalytic core consists of 2 alpha, 1 beta, 1 beta' and 1 omega subunit. When a sigma factor is associated with the core the holoenzyme is formed, which can initiate transcription.

It carries out the reaction RNA(n) + a ribonucleoside 5'-triphosphate = RNA(n+1) + diphosphate. Its function is as follows. DNA-dependent RNA polymerase catalyzes the transcription of DNA into RNA using the four ribonucleoside triphosphates as substrates. The polypeptide is DNA-directed RNA polymerase subunit beta (Chlamydia felis (strain Fe/C-56) (Chlamydophila felis)).